The following is a 194-amino-acid chain: Inner membrane-spanning protein YciB (194 aa).

5 consecutive transmembrane segments (helical) span residues 3–23 (LFIEYFPLLIFFIINSIAGIY), 47–67 (IPAKQWIIFGLIVVFGGLTIY), 76–96 (WKVTIINAFFAAALLVSNTFF), 119–139 (LNLAWALFFLFCSGLNYYIAF), and 149–169 (FKVFGLTGLMFLFSITSILFL).

It belongs to the YciB family.

It is found in the cell inner membrane. Plays a role in cell envelope biogenesis, maintenance of cell envelope integrity and membrane homeostasis. In Colwellia psychrerythraea (strain 34H / ATCC BAA-681) (Vibrio psychroerythus), this protein is Inner membrane-spanning protein YciB.